Consider the following 126-residue polypeptide: Protein ApaG (126 aa).

An ApaG domain is found at 2-126 (SQLTSSVRVD…FRLSIPGLLH (125 aa)).

The polypeptide is Protein ApaG (Shewanella halifaxensis (strain HAW-EB4)).